The chain runs to 185 residues: Ribosome-recycling factor (185 aa).

It belongs to the RRF family.

It localises to the cytoplasm. Functionally, responsible for the release of ribosomes from messenger RNA at the termination of protein biosynthesis. May increase the efficiency of translation by recycling ribosomes from one round of translation to another. This Vibrio parahaemolyticus serotype O3:K6 (strain RIMD 2210633) protein is Ribosome-recycling factor.